A 376-amino-acid polypeptide reads, in one-letter code: Succinyl-diaminopimelate desuccinylase (376 aa).

Residue His-67 coordinates Zn(2+). Asp-69 is an active-site residue. Asp-100 is a binding site for Zn(2+). Glu-134 acts as the Proton acceptor in catalysis. Residues Glu-135, Glu-163, and His-349 each contribute to the Zn(2+) site.

It belongs to the peptidase M20A family. DapE subfamily. In terms of assembly, homodimer. Zn(2+) is required as a cofactor. Co(2+) serves as cofactor.

It carries out the reaction N-succinyl-(2S,6S)-2,6-diaminopimelate + H2O = (2S,6S)-2,6-diaminopimelate + succinate. It participates in amino-acid biosynthesis; L-lysine biosynthesis via DAP pathway; LL-2,6-diaminopimelate from (S)-tetrahydrodipicolinate (succinylase route): step 3/3. In terms of biological role, catalyzes the hydrolysis of N-succinyl-L,L-diaminopimelic acid (SDAP), forming succinate and LL-2,6-diaminopimelate (DAP), an intermediate involved in the bacterial biosynthesis of lysine and meso-diaminopimelic acid, an essential component of bacterial cell walls. The protein is Succinyl-diaminopimelate desuccinylase of Idiomarina loihiensis (strain ATCC BAA-735 / DSM 15497 / L2-TR).